The following is a 445-amino-acid chain: tRNA modification GTPase MnmE (445 aa).

The (6S)-5-formyl-5,6,7,8-tetrahydrofolate site is built by arginine 20, glutamate 79, and lysine 119. The 157-residue stretch at 215 to 371 folds into the TrmE-type G domain; it reads GLKLAIIGPP…ILKNIENIAE (157 aa). Asparagine 225 is a K(+) binding site. GTP contacts are provided by residues 225–230, 244–250, and 269–272; these read NAGKSS, SNIAGTT, and DTAG. Residue serine 229 coordinates Mg(2+). Residues serine 244, isoleucine 246, and threonine 249 each coordinate K(+). Threonine 250 contacts Mg(2+). Lysine 445 is a binding site for (6S)-5-formyl-5,6,7,8-tetrahydrofolate.

This sequence belongs to the TRAFAC class TrmE-Era-EngA-EngB-Septin-like GTPase superfamily. TrmE GTPase family. In terms of assembly, homodimer. Heterotetramer of two MnmE and two MnmG subunits. Requires K(+) as cofactor.

Its subcellular location is the cytoplasm. In terms of biological role, exhibits a very high intrinsic GTPase hydrolysis rate. Involved in the addition of a carboxymethylaminomethyl (cmnm) group at the wobble position (U34) of certain tRNAs, forming tRNA-cmnm(5)s(2)U34. This is tRNA modification GTPase MnmE from Rickettsia canadensis (strain McKiel).